Consider the following 88-residue polypeptide: Small ribosomal subunit protein bS20 (88 aa).

The disordered stretch occupies residues 1–25 (MANSAQARKRVRQNNTRRQHAASQR). Basic residues predominate over residues 7-20 (ARKRVRQNNTRRQH).

Belongs to the bacterial ribosomal protein bS20 family.

Binds directly to 16S ribosomal RNA. This is Small ribosomal subunit protein bS20 from Psychrobacter sp. (strain PRwf-1).